Consider the following 198-residue polypeptide: uncharacterized protein (198 aa).

Disordered stretches follow at residues 15–69 (RLGQ…KDTR) and 172–198 (FSVKESSNLSNNDSDASLDEDTLLWGL). Composition is skewed to basic and acidic residues over residues 37-49 (HKSFENLGRDQSR) and 56-69 (FNEKQSTEPPKDTR). A compositionally biased stretch (low complexity) spans 176–186 (ESSNLSNNDSD). Over residues 187-198 (ASLDEDTLLWGL) the composition is skewed to acidic residues.

The protein resides in the nucleus. This is an uncharacterized protein from Schizosaccharomyces pombe (strain 972 / ATCC 24843) (Fission yeast).